The following is a 187-amino-acid chain: Peptidyl-tRNA hydrolase (187 aa).

Tyr18 contacts tRNA. His23 acts as the Proton acceptor in catalysis. The tRNA site is built by Phe65, Asn67, and Asn113.

This sequence belongs to the PTH family. In terms of assembly, monomer.

The protein resides in the cytoplasm. It carries out the reaction an N-acyl-L-alpha-aminoacyl-tRNA + H2O = an N-acyl-L-amino acid + a tRNA + H(+). Hydrolyzes ribosome-free peptidyl-tRNAs (with 1 or more amino acids incorporated), which drop off the ribosome during protein synthesis, or as a result of ribosome stalling. In terms of biological role, catalyzes the release of premature peptidyl moieties from peptidyl-tRNA molecules trapped in stalled 50S ribosomal subunits, and thus maintains levels of free tRNAs and 50S ribosomes. This chain is Peptidyl-tRNA hydrolase, found in Coxiella burnetii (strain RSA 331 / Henzerling II).